A 297-amino-acid polypeptide reads, in one-letter code: CCAAT/enhancer-binding protein beta (297 aa).

Residues 1-22 (MHRLLAWDAACLPPPPAAFRPM) form a required for Lys-134 sumoylation region. Asymmetric dimethylarginine; by CARM1 is present on arginine 3. The interval 22–105 (MEVANFYYEP…YGAKPSKKPS (84 aa)) is required for MYC transcriptional repression. Residue lysine 39 is modified to N6-acetyllysine; alternate. Lysine 39 bears the N6-methylated lysine; alternate mark. 2 positions are modified to N6-acetyllysine; by KAT2A and KAT2B: lysine 99 and lysine 102. Lysine 103 is modified (N6-acetyllysine; by KAT2A and KAT2B; alternate). A Glycyl lysine isopeptide (Lys-Gly) (interchain with G-Cter in SUMO2); alternate cross-link involves residue lysine 103. A Phosphoserine; by RPS6KA1 and PKC/PRKCA modification is found at serine 105. Lysine 134 is covalently cross-linked (Glycyl lysine isopeptide (Lys-Gly) (interchain with G-Cter in SUMO2); alternate). Lysine 134 participates in a covalent cross-link: Glycyl lysine isopeptide (Lys-Gly) (interchain with G-Cter in SUMO); alternate. Residue lysine 145 forms a Glycyl lysine isopeptide (Lys-Gly) (interchain with G-Cter in SUMO2) linkage. Residues 172 to 201 (SGSSGSLSTSSSSSPPGTPSPADAKAAPAA) are disordered. Position 180 is a phosphothreonine; by GSK3-beta (threonine 180). Serine 181 and serine 182 each carry an O-linked (GlcNAc) serine glycan. Serine 185 bears the Phosphoserine; by GSK3-beta mark. Threonine 189 is modified (phosphothreonine; by RPS6KA1, CDK2 and MAPK). Glycyl lysine isopeptide (Lys-Gly) (interchain with G-Cter in SUMO2) cross-links involve residues lysine 212 and lysine 214. Positions 223–286 (SDEYKMRRER…STLRNLFKQL (64 aa)) constitute a bZIP domain. Residues 227–247 (KMRRERNNIAVRKSRDKAKMR) are basic motif. Position 240 is a phosphoserine; by PKC/PRKCA (serine 240). The leucine-zipper stretch occupies residues 249 to 256 (LETQHKVL). Serine 277 carries the phosphoserine; by CaMK2 modification. A Glycyl lysine isopeptide (Lys-Gly) (interchain with G-Cter in SUMO2) cross-link involves residue lysine 284.

Belongs to the bZIP family. C/EBP subfamily. Binds DNA as a homodimer and as a heterodimer. Interacts with MYB; within the complex, MYB and CEBPB bind to different promoter regions. Interacts with ATF4. Binds DNA as a heterodimer with ATF4. Can form stable heterodimers with CEBPA, CEBPD, CEBPE and CEBPG. Interacts with SIX1. Isoform 2 and isoform 3 also form heterodimers. Interacts with TRIM28 and PTGES2. Interacts with PRDM16. Interacts with CCDC85B. Forms a complex with THOC5. Interacts with ZNF638; this interaction increases transcriptional activation. Interacts with CIDEA and CIDEC; these interactions increase transcriptional activation of a subset of CEBPB downstream target genes. Interacts with DDIT3/CHOP. Interacts with EP300; recruits EP300 to chromatin. Interacts with RORA; the interaction disrupts interaction with EP300. Interacts (not methylated) with MED23, MED26, SMARCA2, SMARCB1 and SMARCC1. Interacts with KAT2A and KAT2B. Interacts with ATF5; EP300 is required for ATF5 and CEBPB interaction and DNA binding. Interacts with NFE2L1; the heterodimer represses expression of DSPP during odontoblast differentiation. In terms of processing, phosphorylated at Thr-189 by MAPK and CDK2, serves to prime phosphorylation at Thr-180 and Ser-185 by GSK3B and acquire DNA-binding as well as transactivation activities, required to induce adipogenesis. MAPK and CDK2 act sequentially to maintain Thr-189 in the primed phosphorylated state during mitotical cloning expansion and thereby progression of terminal differentiation. Phosphorylation at Ser-105 enhances transactivation activity. Phosphorylation at Ser-277 in response to calcium increases transactivation activity. Phosphorylated at Thr-189 by RPS6KA1. Methylated. Methylation at Arg-3 by CARM1 and at Lys-39 by EHMT2 inhibit transactivation activity. Methylation is probably inhibited by phosphorylation at Thr-189. Post-translationally, sumoylated by polymeric chains of SUMO2 or SUMO3. Sumoylation at Lys-134 is required for inhibition of T-cells proliferation. In adipocytes, sumoylation at Lys-134 by PIAS1 leads to ubiquitination and subsequent proteasomal degradation. Desumoylated by SENP2, which abolishes ubiquitination and stabilizes protein levels. In terms of processing, ubiquitinated, leading to proteasomal degradation. O-glycosylated, glycosylation at Ser-181 and Ser-182 prevents phosphorylation on Thr-189, Ser-185 and Thr-180 and DNA binding activity which delays the adipocyte differentiation program. Post-translationally, acetylated. Acetylation at Lys-39 is an important and dynamic regulatory event that contributes to its ability to transactivate target genes, including those associated with adipogenesis and adipocyte function. Deacetylation by HDAC1 represses its transactivation activity. Acetylated by KAT2A and KAT2B within a cluster of lysine residues between amino acids 99-103, this acetylation is strongly induced by glucocorticoid treatment and enhances transactivation activity. As to expression, liver and lung.

The protein resides in the nucleus. It localises to the cytoplasm. Functionally, important transcription factor regulating the expression of genes involved in immune and inflammatory responses. Also plays a significant role in adipogenesis, as well as in the gluconeogenic pathway, liver regeneration, and hematopoiesis. The consensus recognition site is 5'-T[TG]NNGNAA[TG]-3'. Its functional capacity is governed by protein interactions and post-translational protein modifications. During early embryogenesis, plays essential and redundant roles with CEBPA. Has a promitotic effect on many cell types such as hepatocytes and adipocytes but has an antiproliferative effect on T-cells by repressing MYC expression, facilitating differentiation along the T-helper 2 lineage. Binds to regulatory regions of several acute-phase and cytokines genes and plays a role in the regulation of acute-phase reaction and inflammation. Also plays a role in intracellular bacteria killing. During adipogenesis, is rapidly expressed and, after activation by phosphorylation, induces CEBPA and PPARG, which turn on the series of adipocyte genes that give rise to the adipocyte phenotype. The delayed transactivation of the CEBPA and PPARG genes by CEBPB appears necessary to allow mitotic clonal expansion and thereby progression of terminal differentiation. Essential for female reproduction because of a critical role in ovarian follicle development. Restricts osteoclastogenesis: together with NFE2L1; represses expression of DSPP during odontoblast differentiation. Its function is as follows. Essential for gene expression induction in activated macrophages. Plays a major role in immune responses such as CD4(+) T-cell response, granuloma formation and endotoxin shock. Not essential for intracellular bacteria killing. In terms of biological role, acts as a dominant negative through heterodimerization with isoform 2. Promotes osteoblast differentiation and osteoclastogenesis. The sequence is that of CCAAT/enhancer-binding protein beta from Rattus norvegicus (Rat).